The sequence spans 518 residues: Membrane-bound lytic murein transglycosylase F (518 aa).

A signal peptide spans 1 to 21 (MKKLKINYLFIGILALLLAVA). The segment at 22 to 269 (LWPSIPWFGK…RIEEKYLGHG (248 aa)) is non-LT domain. Residues 270–518 (DDFDYVDTRT…SRKGSEEKQN (249 aa)) form an LT domain region. Glu-314 is a catalytic residue.

It in the N-terminal section; belongs to the bacterial solute-binding protein 3 family. This sequence in the C-terminal section; belongs to the transglycosylase Slt family.

It is found in the cell outer membrane. It catalyses the reaction Exolytic cleavage of the (1-&gt;4)-beta-glycosidic linkage between N-acetylmuramic acid (MurNAc) and N-acetylglucosamine (GlcNAc) residues in peptidoglycan, from either the reducing or the non-reducing ends of the peptidoglycan chains, with concomitant formation of a 1,6-anhydrobond in the MurNAc residue.. Murein-degrading enzyme that degrades murein glycan strands and insoluble, high-molecular weight murein sacculi, with the concomitant formation of a 1,6-anhydromuramoyl product. Lytic transglycosylases (LTs) play an integral role in the metabolism of the peptidoglycan (PG) sacculus. Their lytic action creates space within the PG sacculus to allow for its expansion as well as for the insertion of various structures such as secretion systems and flagella. The protein is Membrane-bound lytic murein transglycosylase F of Escherichia coli (strain SMS-3-5 / SECEC).